The chain runs to 461 residues: Kynureninase (461 aa).

Pyridoxal 5'-phosphate is bound by residues Leu114, Thr115, 142 to 145, Asp228, His231, and Tyr253; that span reads FPSD. Lys254 bears the N6-(pyridoxal phosphate)lysine mark. Positions 288 and 316 each coordinate pyridoxal 5'-phosphate.

It belongs to the kynureninase family. In terms of assembly, homodimer. It depends on pyridoxal 5'-phosphate as a cofactor.

Its subcellular location is the cytoplasm. The catalysed reaction is L-kynurenine + H2O = anthranilate + L-alanine + H(+). The enzyme catalyses 3-hydroxy-L-kynurenine + H2O = 3-hydroxyanthranilate + L-alanine + H(+). Its pathway is amino-acid degradation; L-kynurenine degradation; L-alanine and anthranilate from L-kynurenine: step 1/1. It participates in cofactor biosynthesis; NAD(+) biosynthesis; quinolinate from L-kynurenine: step 2/3. Functionally, catalyzes the cleavage of L-kynurenine (L-Kyn) and L-3-hydroxykynurenine (L-3OHKyn) into anthranilic acid (AA) and 3-hydroxyanthranilic acid (3-OHAA), respectively. This chain is Kynureninase, found in Candida albicans (strain SC5314 / ATCC MYA-2876) (Yeast).